A 514-amino-acid chain; its full sequence is MMTTANAPQANRALKTKDTSQADTKLSALFAARHDEQNLQSPYDIGLIIVALALMTIGIIIVTSASMPVAERIHDNPFYFAIRHGIYIVGAIIAAMVVLELPMQFWRTANPYLLLAAIGLLVAVLLVGRTVNGSTRWLALGPITIQAAEPAKLFFFTYLAGYLVRRYEEVTENLKGFIKPLVVFFALAMLLLLQPDLGTVVVMFATTIGLLFLAGARLWQFFALVFAGVLAVVALIVFEEYRMKRVTSFLDPWADPFGAGYQLTQSLMAYGRGNWFGQGLGNSLQKLEFLPEAHTDFVMAILAEELGFVGVLAVLGLILWMVVRALQIGNKALLKSRPFEGYLAYSVGIWFSFQTAVNIGASAGILPTKGLTLPLVSYGGSSLIVMSVAVALLLRIDFELRVDGVQALGRGDNKRTSKAKAKPSAKSAAKPAVRTKHTNAEPFADAEADYNQAPDLKASDVNAPDMHESSEDAPVAKTKDAGSKKASNTVSPEDEGKAGIKAILARVSKEASSE.

Helical transmembrane passes span 45–65, 86–106, 108–128, 137–157, 182–202, 218–238, 301–321, 347–367, and 373–393; these read IGLIIVALALMTIGIIIVTSA, IYIVGAIIAAMVVLELPMQFW, TANPYLLLAAIGLLVAVLLVG, WLALGPITIQAAEPAKLFFFT, VVFFALAMLLLLQPDLGTVVV, LWQFFALVFAGVLAVVALIVF, ILAEELGFVGVLAVLGLILWM, VGIWFSFQTAVNIGASAGILP, and LPLVSYGGSSLIVMSVAVALL. Disordered stretches follow at residues 411–437 and 449–501; these read GDNKRTSKAKAKPSAKSAAKPAVRTKH and DYNQ…AGIK.

This sequence belongs to the SEDS family. FtsW subfamily.

The protein resides in the cell inner membrane. It catalyses the reaction [GlcNAc-(1-&gt;4)-Mur2Ac(oyl-L-Ala-gamma-D-Glu-L-Lys-D-Ala-D-Ala)](n)-di-trans,octa-cis-undecaprenyl diphosphate + beta-D-GlcNAc-(1-&gt;4)-Mur2Ac(oyl-L-Ala-gamma-D-Glu-L-Lys-D-Ala-D-Ala)-di-trans,octa-cis-undecaprenyl diphosphate = [GlcNAc-(1-&gt;4)-Mur2Ac(oyl-L-Ala-gamma-D-Glu-L-Lys-D-Ala-D-Ala)](n+1)-di-trans,octa-cis-undecaprenyl diphosphate + di-trans,octa-cis-undecaprenyl diphosphate + H(+). The protein operates within cell wall biogenesis; peptidoglycan biosynthesis. Peptidoglycan polymerase that is essential for cell division. This is Probable peptidoglycan glycosyltransferase FtsW from Alteromonas naphthalenivorans.